A 146-amino-acid polypeptide reads, in one-letter code: Hemoglobin subunit beta (146 aa).

Residue valine 1 is modified to N-acetylvaline. The region spanning 2-146 (HLTGEEKSAV…VANALAHKYH (145 aa)) is the Globin domain. The residue at position 12 (threonine 12) is a Phosphothreonine. Phosphoserine is present on serine 44. Lysine 59 bears the N6-acetyllysine mark. Position 63 (histidine 63) interacts with heme b. At lysine 82 the chain carries N6-acetyllysine. A heme b-binding site is contributed by histidine 92. An S-nitrosocysteine modification is found at cysteine 93. At lysine 144 the chain carries N6-acetyllysine.

This sequence belongs to the globin family. Heterotetramer of two alpha chains and two beta chains. Red blood cells.

Its function is as follows. Involved in oxygen transport from the lung to the various peripheral tissues. The sequence is that of Hemoglobin subunit beta (HBB) from Phoca vitulina (Harbor seal).